The chain runs to 936 residues: MutS protein homolog 4 (936 aa).

2 disordered regions span residues 1–83 and 103–133; these read MLRP…AQGS and GASS…SGYK. Residues 7–20 are compositionally biased toward low complexity; that stretch reads SSTSPSAPAVSPSS. The span at 35–55 shows a compositional bias: polar residues; sequence LQETPQSRPSVQVVSASTCPG. 680-687 serves as a coordination point for ATP; it reads GPNMSGKS.

Belongs to the DNA mismatch repair MutS family. In terms of assembly, heterooligomer of MSH4 and MSH5. As to expression, highly expressed in testis. Also expressed in the ovary.

It is found in the chromosome. Involved in meiotic recombination. Required for reciprocal recombination and proper segregation of homologous chromosomes at meiosis. The polypeptide is MutS protein homolog 4 (MSH4) (Homo sapiens (Human)).